Here is a 485-residue protein sequence, read N- to C-terminus: NADH-quinone oxidoreductase subunit N (485 aa).

Helical transmembrane passes span 10-30 (AMLP…SIAW), 35-55 (FINA…LYFV), 75-95 (FYIG…YPWL), 104-124 (EFYL…SANH), 125-145 (LASL…LIGY), 159-179 (YMLL…LLYA), 203-223 (ILAG…LVPF), 235-255 (PAPV…AVVM), 271-291 (LVLS…AISQ), 297-317 (LLGY…VAVQ), 327-347 (GVYL…VSLM), 374-394 (AVMT…GFIG), 408-427 (WWLT…YYLR), and 449-469 (ALTA…VLGI).

The protein belongs to the complex I subunit 2 family. As to quaternary structure, NDH-1 is composed of 13 different subunits. Subunits NuoA, H, J, K, L, M, N constitute the membrane sector of the complex.

The protein resides in the cell inner membrane. The catalysed reaction is a quinone + NADH + 5 H(+)(in) = a quinol + NAD(+) + 4 H(+)(out). Its function is as follows. NDH-1 shuttles electrons from NADH, via FMN and iron-sulfur (Fe-S) centers, to quinones in the respiratory chain. The immediate electron acceptor for the enzyme in this species is believed to be ubiquinone. Couples the redox reaction to proton translocation (for every two electrons transferred, four hydrogen ions are translocated across the cytoplasmic membrane), and thus conserves the redox energy in a proton gradient. The sequence is that of NADH-quinone oxidoreductase subunit N from Yersinia enterocolitica serotype O:8 / biotype 1B (strain NCTC 13174 / 8081).